The following is a 37-amino-acid chain: uncharacterized protein (37 aa).

The chain crosses the membrane as a helical span at residues 13–33; sequence TFLTIIVLLMIVFGIAIVALL.

The protein localises to the host membrane. This is an uncharacterized protein from Acidianus convivator (ABV).